The chain runs to 283 residues: Pantothenate synthetase (283 aa).

Met30 to His37 is a binding site for ATP. Catalysis depends on His37, which acts as the Proton donor. Residue Gln61 coordinates (R)-pantoate. Gln61 contacts beta-alanine. ATP is bound at residue Gly149–Asp152. Gln155 lines the (R)-pantoate pocket. ATP contacts are provided by residues Val178 and Leu186 to Arg189.

It belongs to the pantothenate synthetase family. Homodimer.

It is found in the cytoplasm. The catalysed reaction is (R)-pantoate + beta-alanine + ATP = (R)-pantothenate + AMP + diphosphate + H(+). Its pathway is cofactor biosynthesis; (R)-pantothenate biosynthesis; (R)-pantothenate from (R)-pantoate and beta-alanine: step 1/1. Functionally, catalyzes the condensation of pantoate with beta-alanine in an ATP-dependent reaction via a pantoyl-adenylate intermediate. The protein is Pantothenate synthetase of Pseudomonas savastanoi pv. phaseolicola (strain 1448A / Race 6) (Pseudomonas syringae pv. phaseolicola (strain 1448A / Race 6)).